The sequence spans 263 residues: Probable HTH-type transcriptional regulator ArcR (263 aa).

The HTH iclR-type domain maps to 14–74 (ITSVLNAVEI…DGDGTYQLGD (61 aa)). Positions 35–54 (LQELTTELDLTKATIHTYMA) form a DNA-binding region, H-T-H motif. The IclR-ED domain occupies 89-262 (LYRLGREEID…ANIIEVRLET (174 aa)).

Functionally, probably regulates transcription of the arcABC operon. The chain is Probable HTH-type transcriptional regulator ArcR (arcR) from Halobacterium salinarum (strain ATCC 29341 / DSM 671 / R1).